Consider the following 207-residue polypeptide: Guanylate kinase (207 aa).

In terms of domain architecture, Guanylate kinase-like spans 4–184 (GTLYIVSAPS…ALMDFKAIIR (181 aa)). 11–18 (APSGAGKS) lines the ATP pocket.

The protein belongs to the guanylate kinase family.

It localises to the cytoplasm. It carries out the reaction GMP + ATP = GDP + ADP. The enzyme catalyses dZMP + ATP = dZDP + ADP. Its pathway is purine metabolism. In terms of biological role, essential for recycling GMP and indirectly, cGMP. Functionally, (Microbial infection) Catalyzes the phosphorylation of dZMP to dZDP, when the bacterium is infected by a phage that produces the substrate for the synthesis of dZTP (2- amino-2'-deoxyadenosine 5'-triphosphate), which is then used by the phage as a DNA polymerase substrate. This chain is Guanylate kinase (gmk), found in Vibrio cholerae serotype O1 (strain ATCC 39315 / El Tor Inaba N16961).